A 359-amino-acid polypeptide reads, in one-letter code: Olfactory receptor 5T2 (359 aa).

Residues 1 to 64 lie on the Extracellular side of the membrane; it reads MSYSIYKSTV…GFTDNLELQT (64 aa). The N-linked (GlcNAc...) asparagine glycan is linked to Asn44. The chain crosses the membrane as a helical span at residues 65-85; it reads IFFFLFLAIYLFTLMGNLGLI. Topologically, residues 86-93 are cytoplasmic; sequence LVVIRDSQ. The helical transmembrane segment at 94 to 114 threads the bilayer; it reads LHKPMYYFLSMLSSVDACYSS. Over 115 to 138 the chain is Extracellular; the sequence is VITPNMLVDFTTKNKVISFLGCVA. The helical transmembrane segment at 139 to 159 threads the bilayer; that stretch reads QVFLACSFGTTECFLLAAMAY. Residues 160–178 are Cytoplasmic-facing; the sequence is DRYVAIYNPLLYSVSMSPR. A helical transmembrane segment spans residues 179 to 199; the sequence is VYMPLINASYVAGILHATIHT. Residues 200–235 are Extracellular-facing; the sequence is VATFSLSFCGANEIRRVFCDIPPLLAISYSDTHTNQ. Residues 236–256 traverse the membrane as a helical segment; that stretch reads LLLFYFVGSIELVTILIVLIS. The Cytoplasmic portion of the chain corresponds to 257-276; sequence YGLILLAILKMYSAEGRRKV. A helical membrane pass occupies residues 277–297; the sequence is FSTCGAHLTGVSIYYGTILFM. The Extracellular portion of the chain corresponds to 298–310; it reads YVRPSSSYASDHD. A helical membrane pass occupies residues 311-331; that stretch reads MIVSIFYTIVIPLLNPVIYSL. The Cytoplasmic segment spans residues 332–359; it reads RNKDVKDSMKKMFGKNQVINKVYFHTKK.

It belongs to the G-protein coupled receptor 1 family.

Its subcellular location is the cell membrane. Functionally, odorant receptor. The polypeptide is Olfactory receptor 5T2 (OR5T2) (Homo sapiens (Human)).